Consider the following 167-residue polypeptide: Sulfopyruvate decarboxylase subunit alpha (167 aa).

The protein belongs to the ComD family. As to quaternary structure, heterododecamer composed of 6 subunits alpha and 6 subunits beta.

It carries out the reaction 3-sulfopyruvate + H(+) = sulfoacetaldehyde + CO2. Its pathway is cofactor biosynthesis; coenzyme M biosynthesis; sulfoacetaldehyde from phosphoenolpyruvate and sulfite: step 4/4. Its function is as follows. Involved in the biosynthesis of the coenzyme M (2-mercaptoethanesulfonic acid). Catalyzes the decarboxylation of sulfopyruvate to sulfoacetaldehyde. In Methanococcus maripaludis (strain DSM 14266 / JCM 13030 / NBRC 101832 / S2 / LL), this protein is Sulfopyruvate decarboxylase subunit alpha (comD).